Here is a 276-residue protein sequence, read N- to C-terminus: Large ribosomal subunit protein uL2 (276 aa).

The disordered stretch occupies residues 221–276 (RGSAMNPNDHPHGGGEGRAPIGRKSPMTPWGKKARGVKTRDRKKASNALIIRRRTK). Positions 252 to 276 (KKARGVKTRDRKKASNALIIRRRTK) are enriched in basic residues.

Belongs to the universal ribosomal protein uL2 family. Part of the 50S ribosomal subunit. Forms a bridge to the 30S subunit in the 70S ribosome.

In terms of biological role, one of the primary rRNA binding proteins. Required for association of the 30S and 50S subunits to form the 70S ribosome, for tRNA binding and peptide bond formation. It has been suggested to have peptidyltransferase activity; this is somewhat controversial. Makes several contacts with the 16S rRNA in the 70S ribosome. The sequence is that of Large ribosomal subunit protein uL2 from Aster yellows phytoplasma.